A 419-amino-acid polypeptide reads, in one-letter code: UDP-N-acetylglucosamine 1-carboxyvinyltransferase (419 aa).

Position 22-23 (22-23 (KN)) interacts with phosphoenolpyruvate. Arg-91 contributes to the UDP-N-acetyl-alpha-D-glucosamine binding site. Residue Cys-115 is the Proton donor of the active site. Position 115 is a 2-(S-cysteinyl)pyruvic acid O-phosphothioketal (Cys-115). Residues 120 to 124 (RPVDL), 160 to 163 (KVSV), Asp-305, and Ile-327 contribute to the UDP-N-acetyl-alpha-D-glucosamine site.

Belongs to the EPSP synthase family. MurA subfamily.

The protein resides in the cytoplasm. The enzyme catalyses phosphoenolpyruvate + UDP-N-acetyl-alpha-D-glucosamine = UDP-N-acetyl-3-O-(1-carboxyvinyl)-alpha-D-glucosamine + phosphate. It participates in cell wall biogenesis; peptidoglycan biosynthesis. Functionally, cell wall formation. Adds enolpyruvyl to UDP-N-acetylglucosamine. This Klebsiella pneumoniae (strain 342) protein is UDP-N-acetylglucosamine 1-carboxyvinyltransferase.